The following is a 957-amino-acid chain: Histone-lysine N-methyltransferase, H3 lysine-9 specific SUVH3 (957 aa).

A YDG domain is found at 73-243 (GHPPGVALGD…PQVCKFLMHG (171 aa)). Positions 182-209 (EAGGGEGGGGGEGGGGAKKGKGGKGGGK) are disordered. A compositionally biased stretch (gly residues) spans 183–198 (AGGGEGGGGGEGGGGA). The region spanning 319–441 (DVSGGQEAVP…HECGDGCSAK (123 aa)) is the Pre-SET domain. The SET domain occupies 455-920 (LPLEVFMTES…QLEELSYNYG (466 aa)). 3 disordered regions span residues 552-595 (DAAR…GGAE), 611-647 (AAGTAPGAGDNMDGVEGPAAQRSGGEEAAAGPGSSGA), and 783-805 (PPALPSTSDVGNGGTTGSGGGGG). Positions 560-578 (QQPQQQQPQQQQQQPAAGG) are enriched in low complexity. The span at 793-805 (GNGGTTGSGGGGG) shows a compositional bias: gly residues. The Post-SET domain occupies 941 to 957 (FVMQCNCGAVGCIGNLM).

Belongs to the class V-like SAM-binding methyltransferase superfamily. Histone-lysine methyltransferase family. Suvar3-9 subfamily.

The protein localises to the nucleus. It is found in the chromosome. The catalysed reaction is L-lysyl(9)-[histone H3] + S-adenosyl-L-methionine = N(6)-methyl-L-lysyl(9)-[histone H3] + S-adenosyl-L-homocysteine + H(+). Its function is as follows. Histone methyltransferase. Monomethylates specifically 'Lys-9' of histone H3. H3 'Lys-9Me1' (H3K9me1) functions as an epigenetic mark of repressed chromatin. The chain is Histone-lysine N-methyltransferase, H3 lysine-9 specific SUVH3 (SUVH3) from Chlamydomonas reinhardtii (Chlamydomonas smithii).